The sequence spans 205 residues: MANFKLMDQNGNNAGEVTLNDNVFSVEPNEAVVFDAIIRQRAGKRQGTSKVKNRSAVRGGGKKPWRQKGTGRARQGSIRAPQWRGGGVVFGPTPRSYAYSMPRKQRRLAIKSVLSQKLLDQNLVVLDKLTMDAPKTRDFVAILNGLKLEGKVLVVSDDKNVQLSAKNLPKVKVVPVNGLNVEDAVNYDKLVLTQDDVKKIEEVLA.

The tract at residues Lys44–Ser77 is disordered. The span at Val51–Gly71 shows a compositional bias: basic residues.

The protein belongs to the universal ribosomal protein uL4 family. As to quaternary structure, part of the 50S ribosomal subunit.

In terms of biological role, one of the primary rRNA binding proteins, this protein initially binds near the 5'-end of the 23S rRNA. It is important during the early stages of 50S assembly. It makes multiple contacts with different domains of the 23S rRNA in the assembled 50S subunit and ribosome. Forms part of the polypeptide exit tunnel. This Lactobacillus delbrueckii subsp. bulgaricus (strain ATCC 11842 / DSM 20081 / BCRC 10696 / JCM 1002 / NBRC 13953 / NCIMB 11778 / NCTC 12712 / WDCM 00102 / Lb 14) protein is Large ribosomal subunit protein uL4.